Here is a 168-residue protein sequence, read N- to C-terminus: Peptide deformylase (168 aa).

Residues C92 and H134 each contribute to the Fe cation site. The active site involves E135. Fe cation is bound at residue H138.

The protein belongs to the polypeptide deformylase family. Requires Fe(2+) as cofactor.

The catalysed reaction is N-terminal N-formyl-L-methionyl-[peptide] + H2O = N-terminal L-methionyl-[peptide] + formate. In terms of biological role, removes the formyl group from the N-terminal Met of newly synthesized proteins. Requires at least a dipeptide for an efficient rate of reaction. N-terminal L-methionine is a prerequisite for activity but the enzyme has broad specificity at other positions. The chain is Peptide deformylase from Teredinibacter turnerae (strain ATCC 39867 / T7901).